Reading from the N-terminus, the 638-residue chain is Paramyosin (638 aa).

The stretch at 1–638 (FSPSTTRLES…EGDISVMQAD (638 aa)) forms a coiled coil.

The protein belongs to the paramyosin family. Homodimer.

Its subcellular location is the cytoplasm. It is found in the myofibril. Paramyosin is a major structural component of many thick filaments isolated from invertebrate muscles. The chain is Paramyosin from Opisthorchis felineus.